The sequence spans 72 residues: Translation initiation factor IF-1 (72 aa).

The region spanning M1 to K72 is the S1-like domain.

It belongs to the IF-1 family. In terms of assembly, component of the 30S ribosomal translation pre-initiation complex which assembles on the 30S ribosome in the order IF-2 and IF-3, IF-1 and N-formylmethionyl-tRNA(fMet); mRNA recruitment can occur at any time during PIC assembly.

The protein localises to the cytoplasm. Its function is as follows. One of the essential components for the initiation of protein synthesis. Stabilizes the binding of IF-2 and IF-3 on the 30S subunit to which N-formylmethionyl-tRNA(fMet) subsequently binds. Helps modulate mRNA selection, yielding the 30S pre-initiation complex (PIC). Upon addition of the 50S ribosomal subunit IF-1, IF-2 and IF-3 are released leaving the mature 70S translation initiation complex. The polypeptide is Translation initiation factor IF-1 (Sphingopyxis alaskensis (strain DSM 13593 / LMG 18877 / RB2256) (Sphingomonas alaskensis)).